The sequence spans 1784 residues: Protein mel-28 (1784 aa).

The segment at 1-956 (MDNENSSIFK…QNDDEDMPEV (956 aa)) is required for nuclear envelope and kinetochore localization. Residues 566 to 778 (GKIEEFCQLA…TSPEDSEHSE (213 aa)) form a required for association with mitotic chromosomes region. Residues 846–1071 (APMTVTIGKH…HNSILKTAKG (226 aa)) form an important for nuclear localization region. Disordered regions lie at residues 945 to 994 (KVQN…AKRI) and 1115 to 1784 (ETMT…RAKQ). The segment covering 1126 to 1149 (GKHDEEKDSEKNVVDEMEEVKDQE) has biased composition (basic and acidic residues). 2 stretches are compositionally biased toward acidic residues: residues 1222–1232 (LEEEGEDEDIW) and 1266–1278 (VNEEEVVESEEVQ). The tract at residues 1239 to 1601 (FEVQMDEDCE…TTVDPSSSAL (363 aa)) is chromatin binding. Residues 1279 to 1293 (QDAKEPEKTEKRQEE) are compositionally biased toward basic and acidic residues. Over residues 1297 to 1306 (EVMQPVIPEE) the composition is skewed to low complexity. Residues 1321 to 1336 (ELQEEPDIVPTGDEDT) show a composition bias toward acidic residues. Basic and acidic residues predominate over residues 1337-1351 (ADKVQEQAVEEDRPP). Residues 1352-1366 (SRNTRSSSVQKSTSQ) are compositionally biased toward polar residues. Over residues 1367 to 1382 (VEDRDPKELVEEERPP) the composition is skewed to basic and acidic residues. The segment covering 1383–1398 (SRNTRSASVQKSSNQE) has biased composition (polar residues). Basic and acidic residues predominate over residues 1428 to 1444 (KVKDQKPEELIEEDRPP). The span at 1445–1459 (SRNTRSASAQKTVAA) shows a compositional bias: polar residues. A compositionally biased stretch (low complexity) spans 1533 to 1546 (AAASTSSSRAGSVT). The segment covering 1566–1576 (VQEEEEEEAEE) has biased composition (acidic residues). The segment covering 1581–1606 (SRSTRSASVKNTTVDPSSSALASTKR) has biased composition (polar residues). Positions 1601-1784 (LASTKRTTSR…LLRSARRAKQ (184 aa)) are important for nuclear localization. The a.T hook 1 DNA-binding region spans 1630-1642 (TPKRGRPAKKDAG). The tract at residues 1630–1784 (TPKRGRPAKK…LLRSARRAKQ (155 aa)) is required for chromosome segregation, nuclear growth, nucleoplasmic accumulation and cell cycle timing, but not required for nuclear envelope and kinetochore localization. Polar residues predominate over residues 1716–1735 (AGTSKQSRSVTRSRASSIDV). The a.T hook 2 DNA-binding region spans 1746-1758 (KRGRGRPPKTVLE).

Ubiquitously expressed (at protein level).

The protein resides in the nucleus. Its subcellular location is the nucleoplasm. It localises to the nucleus envelope. It is found in the nucleus inner membrane. The protein localises to the nuclear pore complex. The protein resides in the chromosome. Its subcellular location is the centromere. It localises to the kinetochore. In terms of biological role, nuclear envelope protein which has essential roles in assembly of nuclear pore complexes and in chromatin maintenance during the cell cycle. Appears to be a stable structural component of the nuclear envelope during interphase. In dividing cells, localizes to kinetochores during early stages of mitosis and then to chromatin during late mitosis. Important for several mitotic processes including chromosome condensation, kinetochore assembly, chromosome segregation and cell-cycle timing. In postmitotic cells, plays a role in the early steps of nuclear pore complex assembly by recruiting the nucleoporins npp-10 and npp-5 to chromatin. Also involved in meiotic chromosome segregation. May function downstream of the Ran GTPase signaling pathway. The protein is Protein mel-28 of Caenorhabditis elegans.